The chain runs to 382 residues: MSALKRMMRVSNRSLIAFIFFFSLSTSCLYFIYVAPGIANTYLFMVQARGIMLRENVKTIGHMIRLYTNKNTTLNGTDYPEGNNTSDYLVQTTTYLPQNFTYLPHLPCPEKLPYMRGFLSVNVSEISFDEVHQLFSKDSEIGPGGHWRPKDCKPRWKVAVLIPFRNRHEHLPIFFLHLIPMLQKQRLEFAFYVIEQTGTQPFNRAMLFNVGFKEAMKDRAWDCVIFHDVDHLPENDRNYYGCGEMPRHFAAKLDKYMYILPYKEFFGGVSGLTVEQFRKINGFPNAFWGWGGEDDDLWNRVHYAGYNVTRPEGDLGKYISIPHHHRGEVQFLGRYKLLRYSKERQYIDGLNNLLYTPKILVDRLYTNISVNLMPELAPIEDY.

Residues M1–L15 lie on the Cytoplasmic side of the membrane. A helical; Signal-anchor for type II membrane protein membrane pass occupies residues I16 to A35. Residues P36 to Y382 lie on the Lumenal side of the membrane. 6 N-linked (GlcNAc...) asparagine glycosylation sites follow: N71, N75, N83, N84, N99, and N122. Residues C108 and C152 are joined by a disulfide bond. UDP-alpha-D-galactose is bound by residues P163–R167, F202–R204, V229–D230, Y258, and W290. C223 and C242 form a disulfide bridge. Residue D230 coordinates Mn(2+). Residue G292–D295 coordinates N-acetyl-D-glucosamine. N307 carries N-linked (GlcNAc...) asparagine glycosylation. Position 323 (H323) interacts with Mn(2+). H323–H324 is a UDP-alpha-D-galactose binding site. R334 contacts N-acetyl-D-glucosamine. N367 carries N-linked (GlcNAc...) asparagine glycosylation.

The protein belongs to the glycosyltransferase 7 family. Requires Mn(2+) as cofactor. The cofactor is Mg(2+). Ca(2+) is required as a cofactor. In terms of tissue distribution, brain and kidney.

It localises to the golgi apparatus. Its subcellular location is the golgi stack membrane. The enzyme catalyses a beta-D-glucosyl-(1&lt;-&gt;1')-N-acylsphing-4-enine + UDP-alpha-D-galactose = a beta-D-Gal-(1-&gt;4)-beta-D-Glc-(1&lt;-&gt;1)-Cer(d18:1(4E)) + UDP + H(+). It functions in the pathway protein modification; protein glycosylation. It participates in sphingolipid metabolism. With respect to regulation, inhibited by EDTA. Functionally, catalyzes the synthesis of lactosylceramide (LacCer) via the transfer of galactose from UDP-galactose to glucosylceramide (GlcCer). LacCer is the starting point in the biosynthesis of all gangliosides (membrane-bound glycosphingolipids) which play pivotal roles in the CNS including neuronal maturation and axonal and myelin formation. The sequence is that of Beta-1,4-galactosyltransferase 6 from Mus musculus (Mouse).